Reading from the N-terminus, the 175-residue chain is Co-chaperone protein HscB homolog (175 aa).

One can recognise a J domain in the interval 2 to 76 (NYFALFNLTP…RAEHMLELRG (75 aa)).

This sequence belongs to the HscB family. As to quaternary structure, interacts with HscA and stimulates its ATPase activity.

Functionally, co-chaperone involved in the maturation of iron-sulfur cluster-containing proteins. Seems to help targeting proteins to be folded toward HscA. This Pseudoalteromonas atlantica (strain T6c / ATCC BAA-1087) protein is Co-chaperone protein HscB homolog.